A 130-amino-acid chain; its full sequence is Protein ApaG (130 aa).

Residues Arg-3–Arg-127 form the ApaG domain.

This chain is Protein ApaG, found in Xanthobacter autotrophicus (strain ATCC BAA-1158 / Py2).